The following is a 249-amino-acid chain: Metallo-beta-lactamase type 2 (249 aa).

Residues 1-22 (MLKRLKGLLVLALGFTGLQVFG) form the signal peptide. Positions 98, 100, 102, 161, and 180 each coordinate Zn(2+). Residue K183 participates in substrate binding. H222 is a Zn(2+) binding site.

The protein belongs to the metallo-beta-lactamase superfamily. Class-B beta-lactamase family. As to quaternary structure, monomer. Requires Zn(2+) as cofactor.

It localises to the periplasm. It carries out the reaction a beta-lactam + H2O = a substituted beta-amino acid. Confers resistance to the different beta-lactams antibiotics (penicillin, cephalosporin and carbapenem) via the hydrolysis of the beta-lactam ring. This is Metallo-beta-lactamase type 2 (blaB5) from Elizabethkingia meningoseptica (Chryseobacterium meningosepticum).